Here is a 7214-residue protein sequence, read N- to C-terminus: Nonribosomal peptide synthetase atnA (7214 aa).

The tract at residues 257–651 (ERKALEQPHA…VGRKDTQVKI (395 aa)) is adenylation 1. A Carrier 1 domain is found at 786-862 (EPVTETEKAV…AMSQIAVELS (77 aa)). Position 823 is an O-(pantetheine 4'-phosphoryl)serine (Ser823). The tract at residues 899-1318 (EDAYPATALQ…LVSQKDYTQI (420 aa)) is condensation 1. Residues 1340–1735 (QVLATPDAPA…ARKDTQAKVR (396 aa)) form an adenylation 2 region. In terms of domain architecture, Carrier 2 spans 1877 to 1953 (QPTSDIEKKV…ALAGRAQYIE (77 aa)). Ser1914 is modified (O-(pantetheine 4'-phosphoryl)serine). The epimerization stretch occupies residues 1962–2384 (PEAEVIDEWF…RQVLETGIDE (423 aa)). Residues 2431-2845 (SPCSPMQLGL…MLSPLDRASL (415 aa)) are condensation 2. Residues 2866–3262 (QNARKRPHAL…VGRKDTQVKV (397 aa)) are adenylation 3. Positions 3398–3472 (ALETPMEETI…DMARIVVAAY (75 aa)) constitute a Carrier 3 domain. The residue at position 3433 (Ser3433) is an O-(pantetheine 4'-phosphoryl)serine. The interval 3510–3904 (VEDVYPSTSL…QLCENEDGRL (395 aa)) is condensation 3. An adenylation 4 region spans residues 3943–4339 (ERARLHPDLL…VGRKDSQVKL (397 aa)). A Carrier 4 domain is found at 4476-4552 (VPGSEAEKVI…ELAGRVTSIS (77 aa)). Residue Ser4513 is modified to O-(pantetheine 4'-phosphoryl)serine. A condensation 4 region spans residues 4601 to 5033 (VEDVYPCSPL…TSAAMRAQLL (433 aa)). An adenylation 5 region spans residues 5051–5446 (FHRTALRYPE…VGRKDTQIKF (396 aa)). Positions 5489-5515 (FITTEGGSGHENKGSPSLKGSSGDPVS) are disordered. One can recognise a Carrier 5 domain in the interval 5591–5667 (APRTAMEKRL…QMANIVARNA (77 aa)). Ser5628 is modified (O-(pantetheine 4'-phosphoryl)serine). The segment at 5707–6123 (QDVYPCTPLQ…HLLGDNEIKM (417 aa)) is condensation 5. The interval 6145-6543 (ERAVLQPEAI…GRKDTQIKLR (399 aa)) is adenylation 6. Positions 6683–6766 (DPADKLALAL…DVARMIEHGN (84 aa)) constitute a Carrier 6 domain. Ser6725 carries the post-translational modification O-(pantetheine 4'-phosphoryl)serine. The interval 6814–7194 (ILLTGATGFL…KSISYMRQIG (381 aa)) is thioesterase (TE) domain. The tract at residues 6895 to 6915 (STVEGRDHPGSESGSTAGPAE) is disordered.

This sequence belongs to the NRP synthetase family.

It functions in the pathway secondary metabolite biosynthesis. Nonribosomal peptide synthetase; part of the gene cluster that mediates the biosynthesis of aspercryptins, linear lipopeptides built from six amino acids including 2 highly unusual and nonproteogenic amino acids, 2-amino-octanoic acid (2aoa) and 2-amino-dodecanol (2adol). The core structure of aspercryptins is as follows: Ser/Ala-Thr-Ile/Val-2aoa-Asn-2adol. The first step of aspercryptin biosynthesis is the generation of the fatty acid precursors, octanoic and dodecanoic acids, by the FAS subunits atnF and atnM. The fatty acid precursors are likely transformed into the corresponding alpha-amino fatty acids in three steps. First, they are hydroxylated by the cytochrome P450 monooxygenase atnE, then oxidized to the corresponding alpha-keto acids by the NAD(P)-dependent oxidoreductase atnD, and finally converted to the alpha-amino fatty acids by the PLP-dependent aminotransferases atnH or atnJ. the alpha-amino fatty acids, 2-amino-octanoic and 2-amino-dodecanoic acids, are recognized, activated, and covalently tethered to the NRPS atnA by its fourth and sixth adenylation domains. The second module of atnA is the Thr module and contains an epimerase (E) domain responsible for the epimerization of Thr to D-allo-Thr. Additionally, despite atnA having only one epimerase domain, the first amino acid of aspercryptin A1 is D-Ser, suggesting that serine is either loaded directly as D-Ser on the first module or that the epimerase domain in the threonine module epimerizes both L-Ser and L-Thr. After condensation of the hexapeptide of aspercryptin, the C-terminal reductase (TE) domain might be involved in the reductive release and production of the aldehyde hexapeptide. Further reduction would generate aspercryptins. The variety of aspercryptins produced reflects the flexibility of the atnA NRPS, allowing incorporation of alanine instead of serine, valine for isoleucine, and a C10 fatty amino alcohol instead of the C12 version. AtnB seems to be involved in the selectivity for Ile versus Val by the third module. Moreover, type B, C and D aspercryptins have an additional N-terminal cichorine, acetyl and propionyl group respectively. The polypeptide is Nonribosomal peptide synthetase atnA (Emericella nidulans (strain FGSC A4 / ATCC 38163 / CBS 112.46 / NRRL 194 / M139) (Aspergillus nidulans)).